The primary structure comprises 57 residues: Large ribosomal subunit protein bL32 (57 aa).

This sequence belongs to the bacterial ribosomal protein bL32 family.

This is Large ribosomal subunit protein bL32 from Mycolicibacterium gilvum (strain PYR-GCK) (Mycobacterium gilvum (strain PYR-GCK)).